A 361-amino-acid chain; its full sequence is UDP-N-acetylglucosamine--N-acetylmuramyl-(pentapeptide) pyrophosphoryl-undecaprenol N-acetylglucosamine transferase (361 aa).

UDP-N-acetyl-alpha-D-glucosamine-binding positions include 11-13 (TGG), Asn124, Arg162, Ser193, and Gln292.

It belongs to the glycosyltransferase 28 family. MurG subfamily.

The protein resides in the cell inner membrane. It carries out the reaction di-trans,octa-cis-undecaprenyl diphospho-N-acetyl-alpha-D-muramoyl-L-alanyl-D-glutamyl-meso-2,6-diaminopimeloyl-D-alanyl-D-alanine + UDP-N-acetyl-alpha-D-glucosamine = di-trans,octa-cis-undecaprenyl diphospho-[N-acetyl-alpha-D-glucosaminyl-(1-&gt;4)]-N-acetyl-alpha-D-muramoyl-L-alanyl-D-glutamyl-meso-2,6-diaminopimeloyl-D-alanyl-D-alanine + UDP + H(+). Its pathway is cell wall biogenesis; peptidoglycan biosynthesis. Functionally, cell wall formation. Catalyzes the transfer of a GlcNAc subunit on undecaprenyl-pyrophosphoryl-MurNAc-pentapeptide (lipid intermediate I) to form undecaprenyl-pyrophosphoryl-MurNAc-(pentapeptide)GlcNAc (lipid intermediate II). The protein is UDP-N-acetylglucosamine--N-acetylmuramyl-(pentapeptide) pyrophosphoryl-undecaprenol N-acetylglucosamine transferase of Elusimicrobium minutum (strain Pei191).